We begin with the raw amino-acid sequence, 370 residues long: CST complex subunit STN1 (370 aa).

The interval 1–187 (MESNSSQCED…KVYDQPFHSP (187 aa)) is interaction with CTC1. Positions 57–157 (VDILGTVIGV…EIHATTYYKV (101 aa)) form a DNA-binding region, OB. Winged helix-turn-helix (wHTH) stretches follow at residues 193–297 (EALS…YVTR) and 298–370 (EDKE…YTAF).

Belongs to the STN1 family. As to quaternary structure, component of the CST complex, composed of TEN1/C17orf106, CTC1/C17orf68 and STN1; in the complex interacts directly with TEN1 and CTC1. Interacts with ACD/TPP1, POT1 and POLA1.

Its subcellular location is the nucleus. It localises to the chromosome. It is found in the telomere. In terms of biological role, component of the CST complex proposed to act as a specialized replication factor promoting DNA replication under conditions of replication stress or natural replication barriers such as the telomere duplex. The CST complex binds single-stranded DNA with high affinity in a sequence-independent manner, while isolated subunits bind DNA with low affinity by themselves. Initially the CST complex has been proposed to protect telomeres from DNA degradation. However, the CST complex has been shown to be involved in several aspects of telomere replication. The CST complex inhibits telomerase and is involved in telomere length homeostasis; it is proposed to bind to newly telomerase-synthesized 3' overhangs and to terminate telomerase action implicating the association with the ACD:POT1 complex thus interfering with its telomerase stimulation activity. The CST complex is also proposed to be involved in fill-in synthesis of the telomeric C-strand probably implicating recruitment and activation of DNA polymerase alpha. The CST complex facilitates recovery from many forms of exogenous DNA damage; seems to be involved in the re-initiation of DNA replication at repaired forks and/or dormant origins. Required for efficicient replication of the duplex region of the telomere. Promotes efficient replication of lagging-strand telomeres. Promotes general replication start following replication-fork stalling implicating new origin firing. May be in involved in C-strand fill-in during late S/G2 phase independent of its role in telomere duplex replication. This is CST complex subunit STN1 from Bos taurus (Bovine).